The sequence spans 227 residues: Max dimerization protein 1 (227 aa).

Positions 21–48 (RREREAEHGYASMLPYSKDRDAFKRRNK) match the Nuclear localization signal motif. Disordered stretches follow at residues 30–66 (YASM…MEKN), 142–161 (MDSV…REEL), and 184–227 (GWSS…GLGL). Positions 55 to 107 (SSRSTHNEMEKNRRAHLRLCLEKLKGLVPLGPESSRHTTLSLLTKAKLHIKKL) constitute a bHLH domain. Residues 198–211 (MQSLGSDEGYSSAT) show a composition bias toward polar residues. Residues 216 to 227 (KLQDGHKAGLGL) are compositionally biased toward basic and acidic residues.

Heterodimer with MAX; the interaction is required for DNA-binding. DNA binding requires dimerization with another bHLH protein; does not form homodimers, and does not bind to DNA in the absence of MAX in vitro. Interacts with RNF17. Ubiquitinated by BIRC2/c-IAP1, leading to its subsequent degradation by the proteasome.

The protein localises to the nucleus. Its function is as follows. Component of a transcriptional repressor complex together with MAX. In complex with MAX binds to the core DNA sequence 5'-CAC[GA]TG-3'. Antagonizes MYC transcriptional activity by competing with MYC for MAX binding. Binds to the TERT promoter and represses telomerase expression, possibly by interfering with MYC binding. The chain is Max dimerization protein 1 (Mxd1) from Mus musculus (Mouse).